Here is a 250-residue protein sequence, read N- to C-terminus: UPF0309 protein BH0227 (250 aa).

The region spanning 31-214 (VAESIQNGGI…KRMADNGYEP (184 aa)) is the SIS domain.

This sequence belongs to the UPF0309 family.

The chain is UPF0309 protein BH0227 from Halalkalibacterium halodurans (strain ATCC BAA-125 / DSM 18197 / FERM 7344 / JCM 9153 / C-125) (Bacillus halodurans).